Reading from the N-terminus, the 304-residue chain is Aspartate carbamoyltransferase catalytic subunit (304 aa).

2 residues coordinate carbamoyl phosphate: arginine 49 and threonine 50. Lysine 77 is a binding site for L-aspartate. Positions 99, 127, and 130 each coordinate carbamoyl phosphate. The L-aspartate site is built by arginine 160 and arginine 211. Carbamoyl phosphate contacts are provided by alanine 250 and proline 251.

Belongs to the aspartate/ornithine carbamoyltransferase superfamily. ATCase family. In terms of assembly, heterododecamer (2C3:3R2) of six catalytic PyrB chains organized as two trimers (C3), and six regulatory PyrI chains organized as three dimers (R2).

It carries out the reaction carbamoyl phosphate + L-aspartate = N-carbamoyl-L-aspartate + phosphate + H(+). It participates in pyrimidine metabolism; UMP biosynthesis via de novo pathway; (S)-dihydroorotate from bicarbonate: step 2/3. In terms of biological role, catalyzes the condensation of carbamoyl phosphate and aspartate to form carbamoyl aspartate and inorganic phosphate, the committed step in the de novo pyrimidine nucleotide biosynthesis pathway. The protein is Aspartate carbamoyltransferase catalytic subunit of Bacillus velezensis (strain DSM 23117 / BGSC 10A6 / LMG 26770 / FZB42) (Bacillus amyloliquefaciens subsp. plantarum).